The following is a 257-amino-acid chain: Mediator of RNA polymerase II transcription subunit 7 (257 aa).

The segment at 33–74 is disordered; it reads EWQRQQNDEEIETKQEEADDKDEKDNEKQNETQDTVPPGELR. Positions 44–63 are enriched in basic and acidic residues; the sequence is ETKQEEADDKDEKDNEKQNE.

The protein belongs to the Mediator complex subunit 7 family. As to quaternary structure, component of the Mediator complex.

The protein resides in the nucleus. Its function is as follows. Component of the Mediator complex, a coactivator involved in the regulated transcription of nearly all RNA polymerase II-dependent genes. Mediator functions as a bridge to convey information from gene-specific regulatory proteins to the basal RNA polymerase II transcription machinery. Mediator is recruited to promoters by direct interactions with regulatory proteins and serves as a scaffold for the assembly of a functional preinitiation complex with RNA polymerase II and the general transcription factors. In Scheffersomyces stipitis (strain ATCC 58785 / CBS 6054 / NBRC 10063 / NRRL Y-11545) (Yeast), this protein is Mediator of RNA polymerase II transcription subunit 7 (MED7).